The sequence spans 92 residues: MDKVATAAYVYGVVQGVGFRYSTQRQAAQLELSGYARNCDDGSVEVVASGEPHAVEMLIEWLKQGGPRSARVDKVLIEPHGKTDYKGFTIRY.

One can recognise an Acylphosphatase-like domain in the interval 5–92 (ATAAYVYGVV…TDYKGFTIRY (88 aa)). Catalysis depends on residues arginine 20 and asparagine 38.

This sequence belongs to the acylphosphatase family.

It catalyses the reaction an acyl phosphate + H2O = a carboxylate + phosphate + H(+). The protein is Acylphosphatase (acyP) of Pectobacterium atrosepticum (strain SCRI 1043 / ATCC BAA-672) (Erwinia carotovora subsp. atroseptica).